Reading from the N-terminus, the 280-residue chain is Chlorophyll a-b binding protein CP29 (280 aa).

The tract at residues 1–42 is disordered; that stretch reads MVFKFPTPPGTQKKAGTTATKPAPKATTKKVATSTGTRSGGV. At valine 2 the chain carries N-acetylvaline. Threonine 7 carries the post-translational modification Phosphothreonine; in State 1 and State 2. Over residues 10 to 37 the composition is skewed to low complexity; it reads GTQKKAGTTATKPAPKATTKKVATSTGT. Threonine 17 carries the phosphothreonine; in State 2 modification. At threonine 33 the chain carries Phosphothreonine; in State 1 and State 2. Chlorophyll b is bound at residue tyrosine 47. Chlorophyll a-binding residues include phenylalanine 73 and serine 79. Serine 103 carries the post-translational modification Phosphoserine; in State 2. Residues glutamate 137 and histidine 140 each coordinate chlorophyll a. 2 helical membrane passes run 143 to 163 and 176 to 196; these read WAML…VSWV and AGLS…ILVG. Chlorophyll b contacts are provided by serine 183, glutamate 199, and arginine 202. Positions 238, 241, 243, and 255 each coordinate chlorophyll a. The helical transmembrane segment at 244 to 264 threads the bilayer; sequence LAMVSFFGYGVQALSTGEGAL.

The protein belongs to the light-harvesting chlorophyll a/b-binding (LHC) protein family. The LHC complex consists of chlorophyll a-b binding proteins. Requires Binds at least 14 chlorophylls (8 Chl-a and 6 Chl-b) and carotenoids such as lutein and neoxanthin. as cofactor. Post-translationally, reversible phosphorylation plays a role in the State transition process and determines the affinity of LHCII for PSI and PSII.

The protein localises to the plastid. The protein resides in the chloroplast thylakoid membrane. Functionally, the light-harvesting complex (LHC) functions as a light receptor, it captures and delivers excitation energy to photosystems with which it is closely associated. CP29 facilitates the State 1 to State 2 transition, where State I is induced by excess photosystem I (PSI) light and State 2 is induced by excess photosystem II (PSII) light. The sequence is that of Chlorophyll a-b binding protein CP29 from Chlamydomonas reinhardtii (Chlamydomonas smithii).